The sequence spans 120 residues: Cell division protein FtsL (120 aa).

Topologically, residues Met-1–Arg-36 are cytoplasmic. The helical transmembrane segment at Ile-37 to Ile-57 threads the bilayer. Over Gly-58–Lys-120 the chain is Extracellular.

Belongs to the FtsL family.

It is found in the cell membrane. Its function is as follows. Essential cell division protein. This Bacillus anthracis protein is Cell division protein FtsL.